A 202-amino-acid chain; its full sequence is MTTTVGIAVKDGVVLATDKRVTAGYYIAHKRGEKIWKIDDHVAATMSGGVADLQSVLSFLTLRAHEYKIEYKRPIPISALVNYMSLILFYSRPYIYIVHSIIGGVDEEEGAVLYMVDWLGTVTKEKYIATGSGSPYAKGALEVGYREDMTLEDAVDLAIKAVKAAIRNDPGSGEGIDVVVITRKEGFKRVFTTQQKLVLPSL.

Position 1 (M1) is a propeptide, removed in mature form; by autocatalysis. Catalysis depends on T2, which acts as the Nucleophile.

This sequence belongs to the peptidase T1B family. As to quaternary structure, the 20S proteasome core is composed of 14 alpha and 14 beta subunits that assemble into four stacked heptameric rings, resulting in a barrel-shaped structure. The two inner rings, each composed of seven catalytic beta subunits, are sandwiched by two outer rings, each composed of seven alpha subunits. The catalytic chamber with the active sites is on the inside of the barrel. Has a gated structure, the ends of the cylinder being occluded by the N-termini of the alpha-subunits. Is capped at one or both ends by the proteasome regulatory ATPase, PAN.

The protein localises to the cytoplasm. The enzyme catalyses Cleavage of peptide bonds with very broad specificity.. With respect to regulation, the formation of the proteasomal ATPase PAN-20S proteasome complex, via the docking of the C-termini of PAN into the intersubunit pockets in the alpha-rings, triggers opening of the gate for substrate entry. Interconversion between the open-gate and close-gate conformations leads to a dynamic regulation of the 20S proteasome proteolysis activity. Functionally, component of the proteasome core, a large protease complex with broad specificity involved in protein degradation. The polypeptide is Proteasome subunit beta 1 (Pyrobaculum aerophilum (strain ATCC 51768 / DSM 7523 / JCM 9630 / CIP 104966 / NBRC 100827 / IM2)).